Reading from the N-terminus, the 154-residue chain is Myoglobin (154 aa).

A Globin domain is found at 2-148; that stretch reads GLSDGEWQLV…FRNDIAAKYK (147 aa). The residue at position 4 (Ser4) is a Phosphoserine. His65 provides a ligand contact to nitrite. His65 serves as a coordination point for O2. Thr68 carries the phosphothreonine modification. His94 lines the heme b pocket.

This sequence belongs to the globin family. In terms of assembly, monomeric.

The protein resides in the cytoplasm. Its subcellular location is the sarcoplasm. It catalyses the reaction Fe(III)-heme b-[protein] + nitric oxide + H2O = Fe(II)-heme b-[protein] + nitrite + 2 H(+). The catalysed reaction is H2O2 + AH2 = A + 2 H2O. Its function is as follows. Monomeric heme protein which primary function is to store oxygen and facilitate its diffusion within muscle tissues. Reversibly binds oxygen through a pentacoordinated heme iron and enables its timely and efficient release as needed during periods of heightened demand. Depending on the oxidative conditions of tissues and cells, and in addition to its ability to bind oxygen, it also has a nitrite reductase activity whereby it regulates the production of bioactive nitric oxide. Under stress conditions, like hypoxia and anoxia, it also protects cells against reactive oxygen species thanks to its pseudoperoxidase activity. The chain is Myoglobin (MB) from Erinaceus europaeus (Western European hedgehog).